Here is a 402-residue protein sequence, read N- to C-terminus: MSETLLNPYFGEFGGMYVPEILMPVLKNLEKAFVEAQQDPTFKETFLDLLKNYAGRPTALTRCRNLTQGSKTKLYLKREDLLHGGAHKTNQVLGQILLAKRMGKTRIIAETGAGQHGVATALACAMLGMPCQIYMGAKDVERQSPNVFRMRLMGANVTAVTKGSASLKDACCEAMRDWAENYEHTHYLLGTAAGPHPFPTIVREFQKIIGEETKQQILAREGRLPDAVIAAVGGGSNAIGMFNDFIEETSVRLIGVEPAGKGIATGQHGAPLGHGTTGIYFGMKAPLMQTPDGQIEESYSISAGLDFPSVGPQHAHLQAIGRAQYESITDDEALSAFQALARHEGIIPALESAHALAYALKLIQRQPEKEQLLVVNLSGRGDKDIFTVDRILSQKGVSYAPF.

Lysine 88 bears the N6-(pyridoxal phosphate)lysine mark.

Belongs to the TrpB family. Tetramer of two alpha and two beta chains. Requires pyridoxal 5'-phosphate as cofactor.

The enzyme catalyses (1S,2R)-1-C-(indol-3-yl)glycerol 3-phosphate + L-serine = D-glyceraldehyde 3-phosphate + L-tryptophan + H2O. The protein operates within amino-acid biosynthesis; L-tryptophan biosynthesis; L-tryptophan from chorismate: step 5/5. Its function is as follows. The beta subunit is responsible for the synthesis of L-tryptophan from indole and L-serine. The sequence is that of Tryptophan synthase beta chain (trpB) from Pasteurella multocida (strain Pm70).